The sequence spans 135 residues: Large ribosomal subunit protein eL27z (135 aa).

This sequence belongs to the eukaryotic ribosomal protein eL27 family.

The polypeptide is Large ribosomal subunit protein eL27z (RPL27A) (Arabidopsis thaliana (Mouse-ear cress)).